A 276-amino-acid chain; its full sequence is Large ribosomal subunit protein uL2 (276 aa).

Residues 219–268 (TVRGSVMNPNDHPHGGGEGRQPVGRKSPMTPWGKPALGLKTRNKKAKSSK) are disordered.

It belongs to the universal ribosomal protein uL2 family. In terms of assembly, part of the 50S ribosomal subunit. Forms a bridge to the 30S subunit in the 70S ribosome.

Its function is as follows. One of the primary rRNA binding proteins. Required for association of the 30S and 50S subunits to form the 70S ribosome, for tRNA binding and peptide bond formation. It has been suggested to have peptidyltransferase activity; this is somewhat controversial. Makes several contacts with the 16S rRNA in the 70S ribosome. In Lactococcus lactis subsp. cremoris (strain MG1363), this protein is Large ribosomal subunit protein uL2.